The chain runs to 539 residues: Sodium/hydrogen exchanger 9B2 (539 aa).

The Cytoplasmic portion of the chain corresponds to 1-94 (MEDSLFSVDK…ACPPQGCFSL (94 aa)). The chain crosses the membrane as a helical span at residues 95 to 112 (AITNVTMVILIWAVVWSI). Residues 113–121 (TGPECLPGG) are Extracellular-facing. The helical transmembrane segment at 122–141 (NLFGILALLFSAALGGKLIS) threads the bilayer. Topologically, residues 142–152 (LIKIPSLPPLP) are cytoplasmic. Residues 153 to 169 (PLLGMLLAGFLIRNIPV) traverse the membrane as a helical segment. The Extracellular portion of the chain corresponds to 170-179 (ITDQVQIHHK). A helical transmembrane segment spans residues 180 to 197 (WSAALRNIALAIILVRAG). Topologically, residues 198-208 (LGLDPKALRKL) are cytoplasmic. Residues 209 to 235 (KAVCLRLSFGPCVVESCTAAVVSHFIM) form a helical membrane-spanning segment. The Extracellular portion of the chain corresponds to 236–241 (GFPLTW). A helical membrane pass occupies residues 242–250 (GFMLGFVLG). The Cytoplasmic portion of the chain corresponds to 251–278 (AVSPAVVVPSMLILQKEGFGVDKGIPTL). Residues valine 252, glycine 283, aspartate 286, and aspartate 287 each coordinate Na(+). A helical transmembrane segment spans residues 279–298 (LMAAGSFDDVLAITGFNTCL). Residues 299-308 (GMAFSSGSTL) are Extracellular-facing. A helical membrane pass occupies residues 309-332 (NTIVRGVLEVVVGIAAGLLFGFFL). Over 333–347 (HYFPSKDQENLKGKR) the chain is Cytoplasmic. Residues 348–365 (SYLILALSVFAVFGSLYF) form a helical membrane-spanning segment. The Extracellular portion of the chain corresponds to 366 to 369 (GFPG). The chain crosses the membrane as a helical span at residues 370–381 (SGGLCTLVMAFL). Residues 382-398 (AGIGWSTDKTVVEDIIA) are Cytoplasmic-facing. The helical transmembrane segment at 399–419 (VSWDIFQPLLFGLIGAEISVA) threads the bilayer. Residues 420–425 (SLKPET) are Extracellular-facing. A helical membrane pass occupies residues 426 to 448 (VGLCTATLIIALIIRICISFLMV). At 449–469 (CFSGFSLKEKIFISLAWMPKA) the chain is on the cytoplasmic side. The helical transmembrane segment at 470-481 (TVQAAIGSVALD) threads the bilayer. Over 482–494 (TARTLENKQFEDY) the chain is Extracellular. Residues 495–517 (GMDVLTVAFLGILVTAPIGALVI) form a helical membrane-spanning segment. Over 518–539 (GLTGPKMLEKSESRTVTEEGSV) the chain is Cytoplasmic.

This sequence belongs to the monovalent cation:proton antiporter 1 (CPA1) transporter (TC 2.A.36) family. Homodimer; dimerization is essential for SLC9B2 activity. Lipids seem to play a role in the stabilization of the dimerization subdomain.

It is found in the cell membrane. Its subcellular location is the mitochondrion membrane. The protein resides in the endosome membrane. It localises to the recycling endosome membrane. The protein localises to the cytoplasmic vesicle. It is found in the secretory vesicle. Its subcellular location is the synaptic vesicle membrane. The protein resides in the basolateral cell membrane. It localises to the apical cell membrane. It catalyses the reaction Li(+)(out) + H(+)(in) = Li(+)(in) + H(+)(out). It carries out the reaction Li(+)(in) + Na(+)(out) = Li(+)(out) + Na(+)(in). The enzyme catalyses Na(+)(in) + H(+)(out) = Na(+)(out) + H(+)(in). With respect to regulation, allosterically inhibited by the N-terminal domain. Inhibited by phloretin. In terms of biological role, electroneutral Na(+) Li(+)/H(+) antiporter that extrudes Na(+) or Li(+) in exchange for external protons across the membrane. Uses the proton gradient/membrane potential to extrude sodium. Contributes to the regulation of intracellular pH and sodium homeostasis. Also able to mediate Na(+)/Li(+) antiporter activity in kidney. This chain is Sodium/hydrogen exchanger 9B2 (slc9b2), found in Xenopus tropicalis (Western clawed frog).